The following is a 433-amino-acid chain: 3-phosphoshikimate 1-carboxyvinyltransferase (433 aa).

3-phosphoshikimate-binding residues include K22, S23, and R27. K22 contacts phosphoenolpyruvate. 2 residues coordinate phosphoenolpyruvate: G94 and R122. 3-phosphoshikimate contacts are provided by S168, S169, Q170, S196, D319, and K346. Q170 contacts phosphoenolpyruvate. Residue D319 is the Proton acceptor of the active site. Residues R350, R394, and K418 each contribute to the phosphoenolpyruvate site.

This sequence belongs to the EPSP synthase family. Monomer.

The protein localises to the cytoplasm. The enzyme catalyses 3-phosphoshikimate + phosphoenolpyruvate = 5-O-(1-carboxyvinyl)-3-phosphoshikimate + phosphate. It functions in the pathway metabolic intermediate biosynthesis; chorismate biosynthesis; chorismate from D-erythrose 4-phosphate and phosphoenolpyruvate: step 6/7. Functionally, catalyzes the transfer of the enolpyruvyl moiety of phosphoenolpyruvate (PEP) to the 5-hydroxyl of shikimate-3-phosphate (S3P) to produce enolpyruvyl shikimate-3-phosphate and inorganic phosphate. The protein is 3-phosphoshikimate 1-carboxyvinyltransferase of Nitrosomonas eutropha (strain DSM 101675 / C91 / Nm57).